A 207-amino-acid chain; its full sequence is Fibronectin type III domain-containing protein 5b (207 aa).

Positions 1 to 26 (MWGIKGSFAVLLLLFLAYIFASSVNA) are cleaved as a signal peptide. The Extracellular portion of the chain corresponds to 27–146 (DSLSAPLNVT…EEVGQAAQLR (120 aa)). Positions 31–122 (APLNVTIKAL…EPVLFRTPKE (92 aa)) constitute a Fibronectin type-III domain. N-linked (GlcNAc...) asparagine glycans are attached at residues N34 and N79. The chain crosses the membrane as a helical span at residues 147 to 167 (AGELIIIVVVLVMWAGVIALF). Over 168–207 (CRQYDIIKDNEPNNNKDKAKNSSECSTPEHPTGGLLRSKV) the chain is Cytoplasmic. The span at 178–188 (EPNNNKDKAKN) shows a compositional bias: basic and acidic residues. The segment at 178–207 (EPNNNKDKAKNSSECSTPEHPTGGLLRSKV) is disordered. The Microbody targeting signal motif lies at 205-207 (SKV).

In terms of assembly, dimer; may exist in other oligomeric forms. Post-translationally, the extracellular domain is cleaved and released from the cell membrane.

The protein localises to the cell membrane. It is found in the peroxisome membrane. Its subcellular location is the secreted. In terms of biological role, may mediate beneficial effects of muscular exercise. In Danio rerio (Zebrafish), this protein is Fibronectin type III domain-containing protein 5b (fndc5b).